The following is a 473-amino-acid chain: Photosystem II CP43 reaction center protein (473 aa).

The propeptide occupies Met-1–Glu-14. Thr-15 bears the N-acetylthreonine mark. Thr-15 carries the post-translational modification Phosphothreonine. 5 helical membrane passes run Leu-69–Ala-93, Leu-134–Asn-155, Lys-178–Thr-200, Lys-255–Ser-275, and Trp-291–Ala-312. Glu-367 provides a ligand contact to [CaMn4O5] cluster. A helical transmembrane segment spans residues Arg-447–Pro-471.

This sequence belongs to the PsbB/PsbC family. PsbC subfamily. In terms of assembly, PSII is composed of 1 copy each of membrane proteins PsbA, PsbB, PsbC, PsbD, PsbE, PsbF, PsbH, PsbI, PsbJ, PsbK, PsbL, PsbM, PsbT, PsbX, PsbY, PsbZ, Psb30/Ycf12, at least 3 peripheral proteins of the oxygen-evolving complex and a large number of cofactors. It forms dimeric complexes. Binds multiple chlorophylls and provides some of the ligands for the Ca-4Mn-5O cluster of the oxygen-evolving complex. It may also provide a ligand for a Cl- that is required for oxygen evolution. PSII binds additional chlorophylls, carotenoids and specific lipids. serves as cofactor.

It is found in the plastid. The protein localises to the chloroplast thylakoid membrane. Functionally, one of the components of the core complex of photosystem II (PSII). It binds chlorophyll and helps catalyze the primary light-induced photochemical processes of PSII. PSII is a light-driven water:plastoquinone oxidoreductase, using light energy to abstract electrons from H(2)O, generating O(2) and a proton gradient subsequently used for ATP formation. The protein is Photosystem II CP43 reaction center protein of Pinus koraiensis (Korean pine).